Consider the following 501-residue polypeptide: Glycerol kinase (501 aa).

Threonine 11 is a binding site for ADP. The ATP site is built by threonine 11, threonine 12, and serine 13. Threonine 11 provides a ligand contact to sn-glycerol 3-phosphate. Position 15 (arginine 15) interacts with ADP. Sn-glycerol 3-phosphate contacts are provided by arginine 81, glutamate 82, tyrosine 133, and aspartate 242. Glycerol is bound by residues arginine 81, glutamate 82, tyrosine 133, aspartate 242, and glutamine 243. ADP is bound by residues threonine 264 and glycine 307. ATP contacts are provided by threonine 264, glycine 307, glutamine 311, and glycine 409. ADP is bound by residues glycine 409 and asparagine 413.

Belongs to the FGGY kinase family.

It carries out the reaction glycerol + ATP = sn-glycerol 3-phosphate + ADP + H(+). It participates in polyol metabolism; glycerol degradation via glycerol kinase pathway; sn-glycerol 3-phosphate from glycerol: step 1/1. With respect to regulation, inhibited by fructose 1,6-bisphosphate (FBP). In terms of biological role, key enzyme in the regulation of glycerol uptake and metabolism. Catalyzes the phosphorylation of glycerol to yield sn-glycerol 3-phosphate. In Borreliella burgdorferi (strain ATCC 35210 / DSM 4680 / CIP 102532 / B31) (Borrelia burgdorferi), this protein is Glycerol kinase.